Consider the following 270-residue polypeptide: Glucosamine-6-phosphate deaminase (270 aa).

Asp72 serves as the catalytic Proton acceptor; for enolization step. The active-site For ring-opening step is the Asp141. His143 functions as the Proton acceptor; for ring-opening step in the catalytic mechanism. The active-site For ring-opening step is Glu148.

Belongs to the glucosamine/galactosamine-6-phosphate isomerase family. NagB subfamily. As to quaternary structure, homohexamer.

The catalysed reaction is alpha-D-glucosamine 6-phosphate + H2O = beta-D-fructose 6-phosphate + NH4(+). Its pathway is amino-sugar metabolism; N-acetylneuraminate degradation; D-fructose 6-phosphate from N-acetylneuraminate: step 5/5. Its activity is regulated as follows. Allosterically activated by N-acetylglucosamine 6-phosphate (GlcNAc6P). Functionally, catalyzes the reversible isomerization-deamination of glucosamine 6-phosphate (GlcN6P) to form fructose 6-phosphate (Fru6P) and ammonium ion. The chain is Glucosamine-6-phosphate deaminase from Haemophilus influenzae (strain PittEE).